The following is a 236-amino-acid chain: Proteasome subunit alpha (236 aa).

Belongs to the peptidase T1A family. As to quaternary structure, the 20S proteasome core is composed of 14 alpha and 14 beta subunits that assemble into four stacked heptameric rings, resulting in a barrel-shaped structure. The two inner rings, each composed of seven catalytic beta subunits, are sandwiched by two outer rings, each composed of seven alpha subunits. The catalytic chamber with the active sites is on the inside of the barrel. Has a gated structure, the ends of the cylinder being occluded by the N-termini of the alpha-subunits. Is capped by the proteasome-associated ATPase, ARC.

The protein resides in the cytoplasm. It participates in protein degradation; proteasomal Pup-dependent pathway. Its activity is regulated as follows. The formation of the proteasomal ATPase ARC-20S proteasome complex, likely via the docking of the C-termini of ARC into the intersubunit pockets in the alpha-rings, may trigger opening of the gate for substrate entry. Interconversion between the open-gate and close-gate conformations leads to a dynamic regulation of the 20S proteasome proteolysis activity. In terms of biological role, component of the proteasome core, a large protease complex with broad specificity involved in protein degradation. The chain is Proteasome subunit alpha from Jonesia denitrificans (strain ATCC 14870 / DSM 20603 / BCRC 15368 / CIP 55.134 / JCM 11481 / NBRC 15587 / NCTC 10816 / Prevot 55134) (Listeria denitrificans).